A 446-amino-acid polypeptide reads, in one-letter code: Adenylosuccinate synthetase (446 aa).

GTP-binding positions include 20-26 and 48-50; these read GDEGKGK and GHT. Residue Asp-21 is the Proton acceptor of the active site. Mg(2+) contacts are provided by Asp-21 and Gly-48. IMP is bound by residues 21-24, 46-49, Thr-137, Arg-151, Gln-232, Thr-247, and Arg-319; these read DEGK and NAGH. Residue His-49 is the Proton donor of the active site. 315-321 is a substrate binding site; sequence SVTGRPR. GTP contacts are provided by residues Arg-321, 347–349, and 429–431; these read KLD and STG.

It belongs to the adenylosuccinate synthetase family. In terms of assembly, homodimer. Mg(2+) is required as a cofactor.

It localises to the cytoplasm. It carries out the reaction IMP + L-aspartate + GTP = N(6)-(1,2-dicarboxyethyl)-AMP + GDP + phosphate + 2 H(+). It participates in purine metabolism; AMP biosynthesis via de novo pathway; AMP from IMP: step 1/2. In terms of biological role, plays an important role in the de novo pathway of purine nucleotide biosynthesis. Catalyzes the first committed step in the biosynthesis of AMP from IMP. This chain is Adenylosuccinate synthetase, found in Ralstonia nicotianae (strain ATCC BAA-1114 / GMI1000) (Ralstonia solanacearum).